We begin with the raw amino-acid sequence, 336 residues long: D-aspartate oxidase (336 aa).

FAD contacts are provided by Glu34, Lys35, Thr41, Ser42, Gly304, Val308, and Ser309. The Microbody targeting signal motif lies at 334-336 (SKL).

This sequence belongs to the DAMOX/DASOX family. Monomer. FAD is required as a cofactor.

It localises to the peroxisome matrix. It carries out the reaction D-aspartate + O2 + H2O = oxaloacetate + H2O2 + NH4(+). It catalyses the reaction D-glutamate + O2 + H2O = H2O2 + 2-oxoglutarate + NH4(+). Selectively catalyzes the oxidative deamination of acidic amino acids. Suppresses the level of D-aspartate in the brain, an amino acid that can act as an agonist for glutamate receptors. Protects the organism from the toxicity of D-amino acids. May also function in the intestine. The polypeptide is D-aspartate oxidase (Octopus vulgaris (Common octopus)).